The primary structure comprises 85 residues: UPF0434 protein HNE_3545 (85 aa).

The protein belongs to the UPF0434 family.

The chain is UPF0434 protein HNE_3545 from Hyphomonas neptunium (strain ATCC 15444).